The following is a 281-amino-acid chain: Digeranylgeranylglyceryl phosphate synthase (281 aa).

7 helical membrane-spanning segments follow: residues 14–34 (AMAA…LSSA), 38–58 (VSLS…VTGA), 95–115 (LFLF…CGII), 149–169 (FLFG…VLFL), 207–227 (ASYI…VPYL), 235–255 (YLFV…QILG), and 259–279 (AARS…SFIV).

Belongs to the UbiA prenyltransferase family. DGGGP synthase subfamily. Mg(2+) serves as cofactor.

The protein resides in the cell membrane. It catalyses the reaction sn-3-O-(geranylgeranyl)glycerol 1-phosphate + (2E,6E,10E)-geranylgeranyl diphosphate = 2,3-bis-O-(geranylgeranyl)-sn-glycerol 1-phosphate + diphosphate. Its pathway is membrane lipid metabolism; glycerophospholipid metabolism. Functionally, prenyltransferase that catalyzes the transfer of the geranylgeranyl moiety of geranylgeranyl diphosphate (GGPP) to the C2 hydroxyl of (S)-3-O-geranylgeranylglyceryl phosphate (GGGP). This reaction is the second ether-bond-formation step in the biosynthesis of archaeal membrane lipids. The polypeptide is Digeranylgeranylglyceryl phosphate synthase (Methanococcoides burtonii (strain DSM 6242 / NBRC 107633 / OCM 468 / ACE-M)).